The primary structure comprises 665 residues: tRNA 5-methylaminomethyl-2-thiouridine biosynthesis bifunctional protein MnmC (665 aa).

The segment at 1-235 is tRNA (mnm(5)s(2)U34)-methyltransferase; that stretch reads MTITRHAQID…KWEVLRGTFI (235 aa). The interval 266–665 is FAD-dependent cmnm(5)s(2)U34 oxidoreductase; sequence IGAGLAGCAT…RGKGKQTVGH (400 aa).

This sequence in the N-terminal section; belongs to the methyltransferase superfamily. tRNA (mnm(5)s(2)U34)-methyltransferase family. In the C-terminal section; belongs to the DAO family. Requires FAD as cofactor.

It localises to the cytoplasm. It carries out the reaction 5-aminomethyl-2-thiouridine(34) in tRNA + S-adenosyl-L-methionine = 5-methylaminomethyl-2-thiouridine(34) in tRNA + S-adenosyl-L-homocysteine + H(+). Its function is as follows. Catalyzes the last two steps in the biosynthesis of 5-methylaminomethyl-2-thiouridine (mnm(5)s(2)U) at the wobble position (U34) in tRNA. Catalyzes the FAD-dependent demodification of cmnm(5)s(2)U34 to nm(5)s(2)U34, followed by the transfer of a methyl group from S-adenosyl-L-methionine to nm(5)s(2)U34, to form mnm(5)s(2)U34. In Pseudomonas syringae pv. syringae (strain B728a), this protein is tRNA 5-methylaminomethyl-2-thiouridine biosynthesis bifunctional protein MnmC.